A 203-amino-acid chain; its full sequence is Ras-related protein RABG3b (203 aa).

15 to 22 is a GTP binding site; sequence GDSGVGKT. The Effector region motif lies at 37–45; the sequence is YKATIGADF. Residues 63–67, 125–128, and 158–159 contribute to the GTP site; these read DTAGQ, NKVD, and SA. S-geranylgeranyl cysteine attachment occurs at residues Cys201 and Cys203. Cys203 carries the cysteine methyl ester modification.

Belongs to the small GTPase superfamily. Rab family. In terms of assembly, interacts with VPS39. As to expression, expressed in xylem cells of inflorescence stems.

It localises to the cell membrane. In terms of biological role, intracellular vesicle trafficking and protein transport. Functions in autophagy. Involved in xylem and tracheary element differentiation. The chain is Ras-related protein RABG3b (RABG3B) from Arabidopsis thaliana (Mouse-ear cress).